An 858-amino-acid polypeptide reads, in one-letter code: MSQDPFALLKAEVDLLGRLLGEAIRTLSGERFFALVEEVRALAKARRQGDEAAGEALLARVEGLSTEEAEALVRAFTHYFHLVNLAEERHRVRVNRLRAQAETLESPRPEGFLALAKALKERGLSLEEAEAHLNRLELLLTFTAHPTETRRRTLRHHLEALQRELEAGDRERLAARVALLYGTEEVRKARPTVEDEIKGGLYYLPTTLWEAVPRVVAGLEAALERVYGRRPRLKSPVRFRSWIGGDRDGNPFVTPEVTAFAGRYAREVARRRFLEALEDLVRDLSLAEARVPVPREVRERGEGVERFMGEPYRRYFAALYRALEREEATTEGLLAALKAAERGLREVGLGRVAEAFLDPLEARLSAFGLELAPLDLREESGRLLEAAAELLRVGGVHPDFLALPQEERERLLTEELKTARPLLPVGEAPEGEALRVALGALKAWRDKGAHVVSMTHHPEDLLAVFLLAREVGLYRPGRPLPFDVVPLFETLEDLRRAPGVLRRLLENPVFLAHARGRGGVEVMIGYSDSNKDAGFLMANLALYEAQEALSRVGEEVGLPVYFFHGRGTSTARGGGPAGRAIASLPPRSVGRRIRLTEQGEALADRYSHPDLAVRHLEQMLYHFALAALGPGQEPEARWREALAQAAEESTRRYRALLQEEGFFDFFEAFTPIREIGELPIASRPVYRRGRVRDIRDLRAIPWVMAWTQVRVLLPGWYGLSALEELPLDLLREMYRGWPFFASTLEAAAMALAKADMGVARLYLRLVPEPLRFFYRRLAEEHARTVALLEAVFQAPLLHNQRTLERQIRLRNPYVDPINIVQVELLRRYRAPGGKEDEALRRALLLSILGVAAGLRNAG.

Residues His145 and Lys531 contribute to the active site.

The protein belongs to the PEPCase type 1 family. Mg(2+) is required as a cofactor.

The catalysed reaction is oxaloacetate + phosphate = phosphoenolpyruvate + hydrogencarbonate. Functionally, forms oxaloacetate, a four-carbon dicarboxylic acid source for the tricarboxylic acid cycle. This Thermus thermophilus (strain ATCC BAA-163 / DSM 7039 / HB27) protein is Phosphoenolpyruvate carboxylase.